We begin with the raw amino-acid sequence, 387 residues long: 8-amino-7-oxononanoate synthase (387 aa).

A pyridoxal 5'-phosphate-binding site is contributed by 109-110 (GY). His134 contributes to the substrate binding site. Residues Ser182, His214, and Thr242 each contribute to the pyridoxal 5'-phosphate site. Lys245 carries the N6-(pyridoxal phosphate)lysine modification. Thr359 is a binding site for substrate.

This sequence belongs to the class-II pyridoxal-phosphate-dependent aminotransferase family. BioF subfamily. As to quaternary structure, homodimer. It depends on pyridoxal 5'-phosphate as a cofactor.

The enzyme catalyses 6-carboxyhexanoyl-[ACP] + L-alanine + H(+) = (8S)-8-amino-7-oxononanoate + holo-[ACP] + CO2. Its pathway is cofactor biosynthesis; biotin biosynthesis. Functionally, catalyzes the decarboxylative condensation of pimeloyl-[acyl-carrier protein] and L-alanine to produce 8-amino-7-oxononanoate (AON), [acyl-carrier protein], and carbon dioxide. The sequence is that of 8-amino-7-oxononanoate synthase from Haemophilus ducreyi (strain 35000HP / ATCC 700724).